Consider the following 291-residue polypeptide: Small ribosomal subunit protein uS3 (291 aa).

Residues 39–110 (IRLEIMKFLK…KISIKIKEVK (72 aa)) enclose the KH type-2 domain.

The protein belongs to the universal ribosomal protein uS3 family. Part of the 30S ribosomal subunit. Forms a tight complex with proteins S10 and S14.

Its function is as follows. Binds the lower part of the 30S subunit head. Binds mRNA in the 70S ribosome, positioning it for translation. The chain is Small ribosomal subunit protein uS3 from Borreliella afzelii (strain PKo) (Borrelia afzelii).